Reading from the N-terminus, the 436-residue chain is Homeobox protein PKNOX1 (436 aa).

A compositionally biased stretch (polar residues) spans 1-20 (MMATQTLSIDSYQDGQQMQV). Residues 1–49 (MMATQTLSIDSYQDGQQMQVVTELKTEQDPNCSEPDAEGVSPPPVESQT) are disordered. Phosphoserine is present on residues Ser33 and Ser41. The MEIS N-terminal domain maps to 80–163 (GSEGTTSASF…MNSETLLSGE (84 aa)). The segment at residues 259-321 (SKNKRGVLPK…NARRRILQPM (63 aa)) is a DNA-binding region (homeobox; TALE-type). Residues 401-436 (AGQSEDESVDSTEEDAGALAPAHISGLVLENSDSLQ) form a disordered region. A compositionally biased stretch (acidic residues) spans 404–416 (SEDESVDSTEEDA).

It belongs to the TALE/MEIS homeobox family. In terms of assembly, interacts with MN1. Ubiquitous. Isoform 2 is expressed in all examined tissues except in bone marrow.

The protein resides in the nucleus. Its function is as follows. Activates transcription in the presence of PBX1A and HOXA1. The protein is Homeobox protein PKNOX1 of Homo sapiens (Human).